The chain runs to 437 residues: Adenylosuccinate synthetase (437 aa).

GTP is bound by residues 13-19 (GDEGKGK) and 41-43 (GHT). D14 functions as the Proton acceptor in the catalytic mechanism. Residues D14 and G41 each coordinate Mg(2+). Residues 14 to 17 (DEGK), 39 to 42 (NAGH), T130, R144, Q225, T240, and R310 each bind IMP. Catalysis depends on H42, which acts as the Proton donor. 306-312 (ATTGRLR) lines the substrate pocket. Residues R312, 338 to 340 (KLD), and 421 to 423 (STG) each bind GTP.

It belongs to the adenylosuccinate synthetase family. In terms of assembly, homodimer. It depends on Mg(2+) as a cofactor.

The protein localises to the cytoplasm. It carries out the reaction IMP + L-aspartate + GTP = N(6)-(1,2-dicarboxyethyl)-AMP + GDP + phosphate + 2 H(+). It participates in purine metabolism; AMP biosynthesis via de novo pathway; AMP from IMP: step 1/2. Functionally, plays an important role in the de novo pathway of purine nucleotide biosynthesis. Catalyzes the first committed step in the biosynthesis of AMP from IMP. This is Adenylosuccinate synthetase from Psychromonas ingrahamii (strain DSM 17664 / CCUG 51855 / 37).